The primary structure comprises 448 residues: Exodeoxyribonuclease 7 large subunit (448 aa).

It belongs to the XseA family. In terms of assembly, heterooligomer composed of large and small subunits.

It localises to the cytoplasm. It carries out the reaction Exonucleolytic cleavage in either 5'- to 3'- or 3'- to 5'-direction to yield nucleoside 5'-phosphates.. Its function is as follows. Bidirectionally degrades single-stranded DNA into large acid-insoluble oligonucleotides, which are then degraded further into small acid-soluble oligonucleotides. The chain is Exodeoxyribonuclease 7 large subunit from Shewanella sp. (strain ANA-3).